Consider the following 254-residue polypeptide: Protein CbbY, plasmid (254 aa).

Belongs to the HAD-like hydrolase superfamily. CbbY/CbbZ/Gph/YieH family.

In Cupriavidus necator (strain ATCC 17699 / DSM 428 / KCTC 22496 / NCIMB 10442 / H16 / Stanier 337) (Ralstonia eutropha), this protein is Protein CbbY, plasmid (cbbYP).